The chain runs to 688 residues: Glycine--tRNA ligase beta subunit (688 aa).

Belongs to the class-II aminoacyl-tRNA synthetase family. As to quaternary structure, tetramer of two alpha and two beta subunits.

It is found in the cytoplasm. It catalyses the reaction tRNA(Gly) + glycine + ATP = glycyl-tRNA(Gly) + AMP + diphosphate. The chain is Glycine--tRNA ligase beta subunit from Chromohalobacter salexigens (strain ATCC BAA-138 / DSM 3043 / CIP 106854 / NCIMB 13768 / 1H11).